A 690-amino-acid chain; its full sequence is Translation factor GUF1, mitochondrial (690 aa).

The segment at 40-68 is disordered; it reads SVTVPAARRHNSTKSTNSTTSTNSTTATS. A compositionally biased stretch (low complexity) spans 52–68; it reads TKSTNSTTSTNSTTATS. The tr-type G domain maps to 89-272; it reads ERYRNFCIVA…AVIKKMPAPV (184 aa). GTP is bound by residues 98–105, 165–169, and 219–222; these read AHIDHGKS, DTPGH, and NKID.

This sequence belongs to the TRAFAC class translation factor GTPase superfamily. Classic translation factor GTPase family. LepA subfamily.

Its subcellular location is the mitochondrion inner membrane. It carries out the reaction GTP + H2O = GDP + phosphate + H(+). Its function is as follows. Promotes mitochondrial protein synthesis. May act as a fidelity factor of the translation reaction, by catalyzing a one-codon backward translocation of tRNAs on improperly translocated ribosomes. Binds to mitochondrial ribosomes in a GTP-dependent manner. The protein is Translation factor GUF1, mitochondrial of Sordaria macrospora (strain ATCC MYA-333 / DSM 997 / K(L3346) / K-hell).